The following is a 210-amino-acid chain: Cytochrome c4 (210 aa).

Residues 1–20 (MNKALVTLLLTLGITGLAHA) form the signal peptide. Cys34, Cys37, His38, Met86, Cys139, Cys142, His143, and Met187 together coordinate heme c.

Post-translationally, binds 2 heme c groups covalently per subunit.

Its subcellular location is the periplasm. In terms of biological role, diheme, high potential cytochrome c believed to be an intermediate electron donor to terminal oxidation systems. This is Cytochrome c4 (cycA) from Azotobacter vinelandii.